A 158-amino-acid polypeptide reads, in one-letter code: Protein-export protein SecB (158 aa).

The protein belongs to the SecB family. As to quaternary structure, homotetramer, a dimer of dimers. One homotetramer interacts with 1 SecA dimer.

The protein localises to the cytoplasm. Its function is as follows. One of the proteins required for the normal export of preproteins out of the cell cytoplasm. It is a molecular chaperone that binds to a subset of precursor proteins, maintaining them in a translocation-competent state. It also specifically binds to its receptor SecA. The protein is Protein-export protein SecB of Photorhabdus laumondii subsp. laumondii (strain DSM 15139 / CIP 105565 / TT01) (Photorhabdus luminescens subsp. laumondii).